The sequence spans 312 residues: MNVTFLGTSSGVPSLTRNVSSLALKLSQSSEVWLFDCGEGTQHQIMKSNIKSSQIKKIFITHMHGDHIYGLPGLLATLGLSGNSKGIEIYGPSELRSYINSALKSSFCKLSYPLHFVEVENYASKNKILFENNKIKVNCACLKHKIPAYGYRVSEKDKPGIFDIKKAQSLKIAPGPIYSELQQGKKVVLADGRTFDGKEFCGPPRVGESFVYCTDTVFSQSAVSLSKNANLLVHESTFSEEDENMAYEKLHSTTIMAAKTALLSNTKKLIITHLSPRYTNKNAITPSDLLKEAQKVFPNTQLAKDFLTTEIK.

Residues His-62, His-64, Asp-66, His-67, His-144, Asp-215, and His-273 each contribute to the Zn(2+) site. Asp-66 (proton acceptor) is an active-site residue.

It belongs to the RNase Z family. As to quaternary structure, homodimer. Zn(2+) serves as cofactor.

The enzyme catalyses Endonucleolytic cleavage of RNA, removing extra 3' nucleotides from tRNA precursor, generating 3' termini of tRNAs. A 3'-hydroxy group is left at the tRNA terminus and a 5'-phosphoryl group is left at the trailer molecule.. Its function is as follows. Zinc phosphodiesterase, which displays some tRNA 3'-processing endonuclease activity. Probably involved in tRNA maturation, by removing a 3'-trailer from precursor tRNA. This Prochlorococcus marinus (strain MIT 9215) protein is Ribonuclease Z.